Here is a 97-residue protein sequence, read N- to C-terminus: Large ribosomal subunit protein bL27 (97 aa).

The propeptide occupies 1–12 (MLKMNLANLQLF). Residues 14-37 (HKKGGGSTSNGRDSQAKRLGAKAA) are disordered.

Belongs to the bacterial ribosomal protein bL27 family. In terms of processing, the N-terminus is cleaved by ribosomal processing cysteine protease Prp.

This chain is Large ribosomal subunit protein bL27, found in Streptococcus gordonii (strain Challis / ATCC 35105 / BCRC 15272 / CH1 / DL1 / V288).